We begin with the raw amino-acid sequence, 613 residues long: Dihydroxy-acid dehydratase (613 aa).

D81 is a binding site for Mg(2+). [2Fe-2S] cluster is bound at residue C122. Mg(2+) is bound by residues D123 and K124. K124 bears the N6-carboxylysine mark. C197 provides a ligand contact to [2Fe-2S] cluster. E493 is a Mg(2+) binding site. Residue S519 is the Proton acceptor of the active site.

The protein belongs to the IlvD/Edd family. Homodimer. [2Fe-2S] cluster serves as cofactor. Requires Mg(2+) as cofactor.

It carries out the reaction (2R)-2,3-dihydroxy-3-methylbutanoate = 3-methyl-2-oxobutanoate + H2O. The enzyme catalyses (2R,3R)-2,3-dihydroxy-3-methylpentanoate = (S)-3-methyl-2-oxopentanoate + H2O. It functions in the pathway amino-acid biosynthesis; L-isoleucine biosynthesis; L-isoleucine from 2-oxobutanoate: step 3/4. Its pathway is amino-acid biosynthesis; L-valine biosynthesis; L-valine from pyruvate: step 3/4. Functions in the biosynthesis of branched-chain amino acids. Catalyzes the dehydration of (2R,3R)-2,3-dihydroxy-3-methylpentanoate (2,3-dihydroxy-3-methylvalerate) into 2-oxo-3-methylpentanoate (2-oxo-3-methylvalerate) and of (2R)-2,3-dihydroxy-3-methylbutanoate (2,3-dihydroxyisovalerate) into 2-oxo-3-methylbutanoate (2-oxoisovalerate), the penultimate precursor to L-isoleucine and L-valine, respectively. In Corynebacterium glutamicum (strain R), this protein is Dihydroxy-acid dehydratase.